Reading from the N-terminus, the 479-residue chain is Ribosomal lysine N-methyltransferase 2 (479 aa).

The SET domain maps to 22-325 (PNISICESPE…INEELFLNYG (304 aa)). Tyr-324 is a binding site for S-adenosyl-L-methionine.

The protein belongs to the class V-like SAM-binding methyltransferase superfamily. RKM2 family.

S-adenosyl-L-methionine-dependent protein-lysine N-methyltransferase that trimethylates 60S ribosomal protein L12 (RPL12A and RPL12B) at 'Lys-4' and 'Lys-11'. The polypeptide is Ribosomal lysine N-methyltransferase 2 (Saccharomyces cerevisiae (strain ATCC 204508 / S288c) (Baker's yeast)).